A 97-amino-acid chain; its full sequence is YcgL domain-containing protein PSPTO_3921 (97 aa).

One can recognise a YcgL domain in the interval 3-87 (RICSIYRSPK…AEDEYIEHLP (85 aa)).

This chain is YcgL domain-containing protein PSPTO_3921, found in Pseudomonas syringae pv. tomato (strain ATCC BAA-871 / DC3000).